The primary structure comprises 159 residues: Ribosomal RNA large subunit methyltransferase H (159 aa).

S-adenosyl-L-methionine contacts are provided by residues L76, G108, and 127–132; that span reads FSNMTF.

It belongs to the RNA methyltransferase RlmH family. In terms of assembly, homodimer.

The protein localises to the cytoplasm. The enzyme catalyses pseudouridine(1915) in 23S rRNA + S-adenosyl-L-methionine = N(3)-methylpseudouridine(1915) in 23S rRNA + S-adenosyl-L-homocysteine + H(+). Its function is as follows. Specifically methylates the pseudouridine at position 1915 (m3Psi1915) in 23S rRNA. The chain is Ribosomal RNA large subunit methyltransferase H from Staphylococcus epidermidis (strain ATCC 35984 / DSM 28319 / BCRC 17069 / CCUG 31568 / BM 3577 / RP62A).